The primary structure comprises 297 residues: Ezy-1 protein (297 aa).

3 disordered regions span residues 1 to 34, 115 to 151, and 255 to 297; these read MAAVVGTGSDGGGDESGDRRTADAADADGDGDGG, FTGKAEPGAEGDDGEDEEEGEAQGVGKDAVDSSSSSS, and QPAG…SPNM. Acidic residues predominate over residues 123–135; the sequence is AEGDDGEDEEEGE. A compositionally biased stretch (low complexity) spans 136–150; that stretch reads AQGVGKDAVDSSSSS. Basic and acidic residues predominate over residues 259-269; that stretch reads DGHEPEPKRPE.

The protein is Ezy-1 protein (Ezy-1) of Chlamydomonas reinhardtii (Chlamydomonas smithii).